Reading from the N-terminus, the 611-residue chain is Probable potassium transport system protein Kup 1 (611 aa).

Helical transmembrane passes span 6-26 (LMVG…LYTM), 44-64 (MLSL…VAVV), 90-110 (LGVI…GAIT), 129-149 (ISPY…ALQA), 158-178 (LFGP…LFGI), 193-213 (GLSY…AVFL), 237-257 (WYGL…AVVV), 280-300 (LVAL…SGAF), 328-348 (IYIG…TLGF), 354-374 (LAAA…ILMF), 385-405 (LAAS…FVSA), and 410-430 (VLEG…LMMT).

It belongs to the HAK/KUP transporter (TC 2.A.72) family.

The protein localises to the cell inner membrane. The catalysed reaction is K(+)(in) + H(+)(in) = K(+)(out) + H(+)(out). Its function is as follows. Transport of potassium into the cell. Likely operates as a K(+):H(+) symporter. The polypeptide is Probable potassium transport system protein Kup 1 (Bradyrhizobium sp. (strain BTAi1 / ATCC BAA-1182)).